The chain runs to 1896 residues: Plexin-A1 (1896 aa).

An N-terminal signal peptide occupies residues 1–26 (MPLPPRSLQVLLLLLLLLLLLPGMWA). In terms of domain architecture, Sema spans 27–512 (EAGLPRAGGG…TEKQVTRVPV (486 aa)). Over 27–1244 (EAGLPRAGGG…VYSDSLLTLP (1218 aa)) the chain is Extracellular. An N-linked (GlcNAc...) asparagine glycan is attached at Asn77. Disulfide bonds link Cys95–Cys104, Cys130–Cys138, Cys286–Cys407, Cys302–Cys358, Cys376–Cys395, Cys515–Cys532, Cys521–Cys563, Cys524–Cys541, Cys535–Cys547, and Cys598–Cys617. N-linked (GlcNAc...) asparagine glycosylation is found at Asn660, Asn672, and Asn701. 4 consecutive IPT/TIG domains span residues 864–959 (PKIL…FTFV), 961–1045 (PTFY…YNYT), 1048–1147 (PTIL…FLYY), and 1150–1236 (PVLE…LQVY). A glycan (N-linked (GlcNAc...) asparagine) is linked at Asn1043. N-linked (GlcNAc...) asparagine glycosylation is found at Asn1187 and Asn1212. Residues 1245-1265 (AIVGIGGGGGLLLLVIVAVLI) traverse the membrane as a helical segment. Positions 1264–1317 (LIAYKRKSRDADRTLKRLQLQMDNLESRVALECKEAFAELQTDIHELTNDLDGA) form a coiled coil. Residues 1266-1896 (AYKRKSRDAD…QVVDTMALSS (631 aa)) are Cytoplasmic-facing.

This sequence belongs to the plexin family. As to quaternary structure, interacts directly with NRP1 and NRP2. Interacts with PLXN1B. Interacts with FARP2, RND1 and KDR/VEGFR2. Binding of SEMA3A leads to dissociation of FARP2. Interacts with CRMP1, DPYSL2/CRMP2, DPYSL3/CRMP3 and DPYSL4/CRMP4. Interacts (via TIG domains) with TREM2; the interaction mediates SEMA6D binding and signaling through TYROBP. Detected in fetal brain, lung, liver and kidney.

Its subcellular location is the cell membrane. In terms of biological role, coreceptor for SEMA3A, SEMA3C, SEMA3F and SEMA6D. Necessary for signaling by class 3 semaphorins and subsequent remodeling of the cytoskeleton. Plays a role in axon guidance, invasive growth and cell migration. Class 3 semaphorins bind to a complex composed of a neuropilin and a plexin. The plexin modulates the affinity of the complex for specific semaphorins, and its cytoplasmic domain is required for the activation of down-stream signaling events in the cytoplasm. Acts as coreceptor of TREM2 for SEMA6D in dendritic cells and is involved in the generation of immune responses and skeletal homeostasis. The polypeptide is Plexin-A1 (Homo sapiens (Human)).